The chain runs to 230 residues: Fibrillarin-like rRNA/tRNA 2'-O-methyltransferase (230 aa).

S-adenosyl-L-methionine contacts are provided by residues 87 to 88 (TT), 105 to 106 (EF), 130 to 131 (DA), and 150 to 153 (DVAQ).

The protein belongs to the methyltransferase superfamily. Fibrillarin family. Interacts with nop5. Component of box C/D small ribonucleoprotein (sRNP) particles that contain rpl7ae, FlpA and nop5, plus a guide RNA.

Its function is as follows. Involved in pre-rRNA and tRNA processing. Utilizes the methyl donor S-adenosyl-L-methionine to catalyze the site-specific 2'-hydroxyl methylation of ribose moieties in rRNA and tRNA. Site specificity is provided by a guide RNA that base pairs with the substrate. Methylation occurs at a characteristic distance from the sequence involved in base pairing with the guide RNA. The sequence is that of Fibrillarin-like rRNA/tRNA 2'-O-methyltransferase from Methanococcus maripaludis (strain DSM 14266 / JCM 13030 / NBRC 101832 / S2 / LL).